A 359-amino-acid polypeptide reads, in one-letter code: Cytokine receptor-like factor 2 (359 aa).

The signal sequence occupies residues 1–19 (MAWALAVILLPRLLAAAAA). Residues 20–232 (AAAVTSRGDV…PAPSPALAPP (213 aa)) lie on the Extracellular side of the membrane. Asparagine 53 carries an N-linked (GlcNAc...) asparagine glycan. A disulfide bond links cysteine 68 and cysteine 82. The 95-residue stretch at 119–213 (PPWNVTLLWT…WTAVTRLSGA (95 aa)) folds into the Fibronectin type-III domain. The N-linked (GlcNAc...) asparagine glycan is linked to asparagine 122. Disulfide bonds link cysteine 168–cysteine 169 and cysteine 181–cysteine 219. The short motif at 201 to 205 (PSEWT) is the WSXWS motif element. Residues 233 to 253 (LLPLGCGLAALLTLSLLLAAL) traverse the membrane as a helical segment. Topologically, residues 254-359 (RLRRVKDALL…MVGDSGYMTL (106 aa)) are cytoplasmic. The Box 1 motif signature appears at 262–270 (LLPCVPDPS). The segment at 312-336 (KRVEPEDGTSLCTVPRPPSFEPRGP) is disordered.

This sequence belongs to the type I cytokine receptor family. Type 5 subfamily. As to quaternary structure, the TSLP receptor is a heterodimer of CRLF2 and IL7R. Binding of TSLP to CRLF2/TSLPR is a mechanistic prerequisite for recruitment of IL7R to the high-affinity ternary complex. As to expression, high level of expression in liver, lung and testis. Also expressed in heart, brain, spleen, thymus and bone marrow. Highly expressed in progenitors and myeloid cells. Isoform 2 is expressed in primary hemotopoietic cells.

The protein resides in the cell membrane. It localises to the secreted. Its function is as follows. Receptor for thymic stromal lymphopoietin (TSLP). Forms a functional complex with TSLP and IL7R which is capable of stimulating cell proliferation through activation of STAT3 and STAT5. Also activates JAK2. Implicated in the development of the hematopoietic system. This Mus musculus (Mouse) protein is Cytokine receptor-like factor 2 (Crlf2).